Reading from the N-terminus, the 428-residue chain is D-amino acid dehydrogenase (428 aa).

FAD is bound at residue 3–17 (VVILGSGVVGVASAY).

Belongs to the DadA oxidoreductase family. It depends on FAD as a cofactor.

It carries out the reaction a D-alpha-amino acid + A + H2O = a 2-oxocarboxylate + AH2 + NH4(+). Its pathway is amino-acid degradation; D-alanine degradation; NH(3) and pyruvate from D-alanine: step 1/1. In terms of biological role, oxidative deamination of D-amino acids. The polypeptide is D-amino acid dehydrogenase (Burkholderia cenocepacia (strain ATCC BAA-245 / DSM 16553 / LMG 16656 / NCTC 13227 / J2315 / CF5610) (Burkholderia cepacia (strain J2315))).